A 149-amino-acid polypeptide reads, in one-letter code: MQIILLEKVANLGQLGDVVNVKNGFARNFLIPQGKAKRATEANLKEFDARRAELEAKQAEILADAKVRAEKLNEAVITIAQKAGVDGRLFGSVTNVDVAEAVTAFGVQIKRHEVRLPNGPFKAIGEYDIEIALHHDVVTPIKIVVVGEA.

It belongs to the bacterial ribosomal protein bL9 family.

Its function is as follows. Binds to the 23S rRNA. The chain is Large ribosomal subunit protein bL9 from Chromobacterium violaceum (strain ATCC 12472 / DSM 30191 / JCM 1249 / CCUG 213 / NBRC 12614 / NCIMB 9131 / NCTC 9757 / MK).